Reading from the N-terminus, the 145-residue chain is Ribosomal RNA large subunit methyltransferase H (145 aa).

S-adenosyl-L-methionine-binding positions include G94 and 113-118; that span reads LSPLTF.

This sequence belongs to the RNA methyltransferase RlmH family. Homodimer.

It localises to the cytoplasm. The enzyme catalyses pseudouridine(1915) in 23S rRNA + S-adenosyl-L-methionine = N(3)-methylpseudouridine(1915) in 23S rRNA + S-adenosyl-L-homocysteine + H(+). Its function is as follows. Specifically methylates the pseudouridine at position 1915 (m3Psi1915) in 23S rRNA. The polypeptide is Ribosomal RNA large subunit methyltransferase H (Sorangium cellulosum (strain So ce56) (Polyangium cellulosum (strain So ce56))).